The sequence spans 271 residues: Formamidopyrimidine-DNA glycosylase (271 aa).

The Schiff-base intermediate with DNA role is filled by Pro2. The Proton donor role is filled by Glu3. Lys57 functions as the Proton donor; for beta-elimination activity in the catalytic mechanism. 3 residues coordinate DNA: His90, Arg109, and Lys151. The segment at 236-270 (HVYGRGGETCTSCGNLLSEIRLGQRTTVFCGICQT) adopts an FPG-type zinc-finger fold. Arg260 (proton donor; for delta-elimination activity) is an active-site residue.

The protein belongs to the FPG family. As to quaternary structure, monomer. Requires Zn(2+) as cofactor.

It carries out the reaction Hydrolysis of DNA containing ring-opened 7-methylguanine residues, releasing 2,6-diamino-4-hydroxy-5-(N-methyl)formamidopyrimidine.. The enzyme catalyses 2'-deoxyribonucleotide-(2'-deoxyribose 5'-phosphate)-2'-deoxyribonucleotide-DNA = a 3'-end 2'-deoxyribonucleotide-(2,3-dehydro-2,3-deoxyribose 5'-phosphate)-DNA + a 5'-end 5'-phospho-2'-deoxyribonucleoside-DNA + H(+). Involved in base excision repair of DNA damaged by oxidation or by mutagenic agents. Acts as a DNA glycosylase that recognizes and removes damaged bases. Has a preference for oxidized purines, such as 7,8-dihydro-8-oxoguanine (8-oxoG). Has AP (apurinic/apyrimidinic) lyase activity and introduces nicks in the DNA strand. Cleaves the DNA backbone by beta-delta elimination to generate a single-strand break at the site of the removed base with both 3'- and 5'-phosphates. This Shewanella baltica (strain OS155 / ATCC BAA-1091) protein is Formamidopyrimidine-DNA glycosylase.